Consider the following 213-residue polypeptide: MQAYQRDFIRFAIDRGVLRFGEFTLKSGRTSPYFFNAGLFNTGSALAQLGRFYAAAVVESGIAFDVLFGPAYKGIPLASATAVALAEHHDRDLPWCFNRKEAKAHGEGGSLVGSPLAGNVLIIDDVITAGTAIREVMQIIKDQDATAAGVLIALNRQERGNGELSAIQEVERDFGIPVVSIVSLNQVLEFLADDPQLKQHLPAVEAYRAQFGI.

5-phospho-alpha-D-ribose 1-diphosphate is bound at residue Lys-26. 34-35 (FF) is a binding site for orotate. 5-phospho-alpha-D-ribose 1-diphosphate contacts are provided by residues 72-73 (YK), Arg-99, Lys-100, Lys-103, His-105, and 124-132 (DDVITAGTA). Residues Thr-128 and Arg-156 each contribute to the orotate site.

It belongs to the purine/pyrimidine phosphoribosyltransferase family. PyrE subfamily. Homodimer. Requires Mg(2+) as cofactor.

The enzyme catalyses orotidine 5'-phosphate + diphosphate = orotate + 5-phospho-alpha-D-ribose 1-diphosphate. Its pathway is pyrimidine metabolism; UMP biosynthesis via de novo pathway; UMP from orotate: step 1/2. Its function is as follows. Catalyzes the transfer of a ribosyl phosphate group from 5-phosphoribose 1-diphosphate to orotate, leading to the formation of orotidine monophosphate (OMP). This is Orotate phosphoribosyltransferase from Pseudomonas syringae pv. syringae (strain B728a).